The chain runs to 100 residues: Urease subunit gamma (100 aa).

Belongs to the urease gamma subunit family. Heterotrimer of UreA (gamma), UreB (beta) and UreC (alpha) subunits. Three heterotrimers associate to form the active enzyme.

It localises to the cytoplasm. The enzyme catalyses urea + 2 H2O + H(+) = hydrogencarbonate + 2 NH4(+). It participates in nitrogen metabolism; urea degradation; CO(2) and NH(3) from urea (urease route): step 1/1. This Rhodopseudomonas palustris (strain BisB5) protein is Urease subunit gamma.